The chain runs to 164 residues: Crossover junction endodeoxyribonuclease RuvC (164 aa).

Active-site residues include D7, E67, and D140. Residues D7, E67, and D140 each coordinate Mg(2+).

This sequence belongs to the RuvC family. Homodimer which binds Holliday junction (HJ) DNA. The HJ becomes 2-fold symmetrical on binding to RuvC with unstacked arms; it has a different conformation from HJ DNA in complex with RuvA. In the full resolvosome a probable DNA-RuvA(4)-RuvB(12)-RuvC(2) complex forms which resolves the HJ. The cofactor is Mg(2+).

Its subcellular location is the cytoplasm. It carries out the reaction Endonucleolytic cleavage at a junction such as a reciprocal single-stranded crossover between two homologous DNA duplexes (Holliday junction).. Functionally, the RuvA-RuvB-RuvC complex processes Holliday junction (HJ) DNA during genetic recombination and DNA repair. Endonuclease that resolves HJ intermediates. Cleaves cruciform DNA by making single-stranded nicks across the HJ at symmetrical positions within the homologous arms, yielding a 5'-phosphate and a 3'-hydroxyl group; requires a central core of homology in the junction. The consensus cleavage sequence is 5'-(A/T)TT(C/G)-3'. Cleavage occurs on the 3'-side of the TT dinucleotide at the point of strand exchange. HJ branch migration catalyzed by RuvA-RuvB allows RuvC to scan DNA until it finds its consensus sequence, where it cleaves and resolves the cruciform DNA. This is Crossover junction endodeoxyribonuclease RuvC from Pelotomaculum thermopropionicum (strain DSM 13744 / JCM 10971 / SI).